Reading from the N-terminus, the 217-residue chain is Thiamine-phosphate synthase (217 aa).

4-amino-2-methyl-5-(diphosphooxymethyl)pyrimidine-binding positions include 42-46 and aspartate 77; that span reads QFRDK. Residues aspartate 78 and aspartate 97 each contribute to the Mg(2+) site. Position 117 (serine 117) interacts with 4-amino-2-methyl-5-(diphosphooxymethyl)pyrimidine. Residue 144-146 coordinates 2-[(2R,5Z)-2-carboxy-4-methylthiazol-5(2H)-ylidene]ethyl phosphate; sequence TIS. Lysine 147 serves as a coordination point for 4-amino-2-methyl-5-(diphosphooxymethyl)pyrimidine. Residues glycine 175 and 195–196 contribute to the 2-[(2R,5Z)-2-carboxy-4-methylthiazol-5(2H)-ylidene]ethyl phosphate site; that span reads IT.

It belongs to the thiamine-phosphate synthase family. Requires Mg(2+) as cofactor.

The enzyme catalyses 2-[(2R,5Z)-2-carboxy-4-methylthiazol-5(2H)-ylidene]ethyl phosphate + 4-amino-2-methyl-5-(diphosphooxymethyl)pyrimidine + 2 H(+) = thiamine phosphate + CO2 + diphosphate. The catalysed reaction is 2-(2-carboxy-4-methylthiazol-5-yl)ethyl phosphate + 4-amino-2-methyl-5-(diphosphooxymethyl)pyrimidine + 2 H(+) = thiamine phosphate + CO2 + diphosphate. It catalyses the reaction 4-methyl-5-(2-phosphooxyethyl)-thiazole + 4-amino-2-methyl-5-(diphosphooxymethyl)pyrimidine + H(+) = thiamine phosphate + diphosphate. Its pathway is cofactor biosynthesis; thiamine diphosphate biosynthesis; thiamine phosphate from 4-amino-2-methyl-5-diphosphomethylpyrimidine and 4-methyl-5-(2-phosphoethyl)-thiazole: step 1/1. In terms of biological role, condenses 4-methyl-5-(beta-hydroxyethyl)thiazole monophosphate (THZ-P) and 2-methyl-4-amino-5-hydroxymethyl pyrimidine pyrophosphate (HMP-PP) to form thiamine monophosphate (TMP). The sequence is that of Thiamine-phosphate synthase from Levilactobacillus brevis (strain ATCC 367 / BCRC 12310 / CIP 105137 / JCM 1170 / LMG 11437 / NCIMB 947 / NCTC 947) (Lactobacillus brevis).